The chain runs to 960 residues: UPF0182 protein DSY1630 (960 aa).

7 helical membrane passes run 7–27, 50–70, 105–125, 169–189, 212–232, 256–276, and 285–305; these read IMLV…GLFE, IIQI…LFSI, TLWL…VTGF, FGPL…AGVI, LALL…FDTF, ALKA…LAFF, and LPIL…PMVL. Disordered regions lie at residues 866 to 899 and 924 to 960; these read SALA…QEDT and TGDS…KTNP. Acidic residues predominate over residues 881 to 897; it reads ETEETTEETEEPVDPQE. The span at 931 to 944 shows a compositional bias: basic and acidic residues; it reads EGGKKADEDAHDVQ. The span at 950 to 960 shows a compositional bias: polar residues; the sequence is SVSSEQSKTNP.

This sequence belongs to the UPF0182 family.

It is found in the cell membrane. The chain is UPF0182 protein DSY1630 from Desulfitobacterium hafniense (strain Y51).